The chain runs to 472 residues: ATP-dependent rRNA helicase rrp3 (472 aa).

Positions 1–52 are disordered; the sequence is MRDVKKRKIAHEAPEHGSDTESTSSHKSVAQQDDPLETQDEATATESRPAPK. Positions 10-19 are enriched in basic and acidic residues; that stretch reads AHEAPEHGSD. Polar residues predominate over residues 20–31; sequence TESTSSHKSVAQ. Positions 52-80 match the Q motif motif; it reads KSFKDLGIIDQLCEACETMGYKAPTPIQA. Residues 83–254 enclose the Helicase ATP-binding domain; it reads IPLALQGRDL…RASLSNPLRV (172 aa). Residue 96–103 participates in ATP binding; the sequence is AETGSGKT. The short motif at 202–205 is the DEAD box element; the sequence is DEAD. The Helicase C-terminal domain maps to 282–426; the sequence is YLVYLLNEFV…EYELEKDEVM (145 aa). A disordered region spans residues 444-472; sequence KNFDEKRGTKAKKFGKGKRSRDEMDQEEG. The segment covering 452-462 has biased composition (basic residues); the sequence is TKAKKFGKGKR.

The protein belongs to the DEAD box helicase family. DDX47/RRP3 subfamily. Interacts with the SSU processome.

It is found in the nucleus. The enzyme catalyses ATP + H2O = ADP + phosphate + H(+). Its function is as follows. ATP-dependent rRNA helicase required for pre-ribosomal RNA processing. Involved in the maturation of the 35S-pre-rRNA and to its cleavage to mature 18S rRNA. In Aspergillus fumigatus (strain ATCC MYA-4609 / CBS 101355 / FGSC A1100 / Af293) (Neosartorya fumigata), this protein is ATP-dependent rRNA helicase rrp3.